Consider the following 541-residue polypeptide: Putative apolipoprotein N-acyltransferase (541 aa).

Helical transmembrane passes span 31-51 (PLPA…AAHA), 65-85 (GWLF…VSMH), 89-109 (GLAA…LALF), 144-164 (AACW…FPWL), 181-201 (LLGV…LAGL), and 215-235 (LAAG…QFSW). Positions 248–511 (VQGNVEQSQK…AGVLPVAVQG (264 aa)) constitute a CN hydrolase domain. Glutamate 292 functions as the Proton acceptor in the catalytic mechanism. Lysine 366 is an active-site residue. Cysteine 416 functions as the Nucleophile in the catalytic mechanism.

The protein belongs to the CN hydrolase family. Apolipoprotein N-acyltransferase subfamily.

It is found in the cell inner membrane. It carries out the reaction N-terminal S-1,2-diacyl-sn-glyceryl-L-cysteinyl-[lipoprotein] + a glycerophospholipid = N-acyl-S-1,2-diacyl-sn-glyceryl-L-cysteinyl-[lipoprotein] + a 2-acyl-sn-glycero-3-phospholipid + H(+). Its pathway is protein modification; lipoprotein biosynthesis (N-acyl transfer). Functionally, catalyzes the phospholipid dependent N-acylation of the N-terminal cysteine of apolipoprotein, the last step in lipoprotein maturation. The polypeptide is Putative apolipoprotein N-acyltransferase (Bordetella parapertussis (strain 12822 / ATCC BAA-587 / NCTC 13253)).